Consider the following 253-residue polypeptide: Ubiquinone/menaquinone biosynthesis C-methyltransferase UbiE (253 aa).

S-adenosyl-L-methionine is bound by residues Thr76, Asp97, and 125–126 (NA).

The protein belongs to the class I-like SAM-binding methyltransferase superfamily. MenG/UbiE family.

The catalysed reaction is a 2-demethylmenaquinol + S-adenosyl-L-methionine = a menaquinol + S-adenosyl-L-homocysteine + H(+). The enzyme catalyses a 2-methoxy-6-(all-trans-polyprenyl)benzene-1,4-diol + S-adenosyl-L-methionine = a 5-methoxy-2-methyl-3-(all-trans-polyprenyl)benzene-1,4-diol + S-adenosyl-L-homocysteine + H(+). Its pathway is quinol/quinone metabolism; menaquinone biosynthesis; menaquinol from 1,4-dihydroxy-2-naphthoate: step 2/2. It participates in cofactor biosynthesis; ubiquinone biosynthesis. Methyltransferase required for the conversion of demethylmenaquinol (DMKH2) to menaquinol (MKH2) and the conversion of 2-polyprenyl-6-methoxy-1,4-benzoquinol (DDMQH2) to 2-polyprenyl-3-methyl-6-methoxy-1,4-benzoquinol (DMQH2). The polypeptide is Ubiquinone/menaquinone biosynthesis C-methyltransferase UbiE (Rhodopseudomonas palustris (strain ATCC BAA-98 / CGA009)).